A 117-amino-acid chain; its full sequence is Immunoglobulin kappa variable 1-5 (117 aa).

Residues Met1 to Cys22 form the signal peptide. A framework-1 region spans residues Asp23–Cys45. The Ig-like domain maps to Ile24–Ser117. A disulfide bond links Cys45 and Cys110. Residues Arg46–Ala56 are complementarity-determining-1. The tract at residues Trp57–Tyr71 is framework-2. A complementarity-determining-2 region spans residues Lys72–Ser78. The tract at residues Gly79–Cys110 is framework-3. The tract at residues Gln111–Ser117 is complementarity-determining-3.

As to quaternary structure, immunoglobulins are composed of two identical heavy chains and two identical light chains; disulfide-linked.

The protein resides in the secreted. Its subcellular location is the cell membrane. Its function is as follows. V region of the variable domain of immunoglobulin light chains that participates in the antigen recognition. Immunoglobulins, also known as antibodies, are membrane-bound or secreted glycoproteins produced by B lymphocytes. In the recognition phase of humoral immunity, the membrane-bound immunoglobulins serve as receptors which, upon binding of a specific antigen, trigger the clonal expansion and differentiation of B lymphocytes into immunoglobulins-secreting plasma cells. Secreted immunoglobulins mediate the effector phase of humoral immunity, which results in the elimination of bound antigens. The antigen binding site is formed by the variable domain of one heavy chain, together with that of its associated light chain. Thus, each immunoglobulin has two antigen binding sites with remarkable affinity for a particular antigen. The variable domains are assembled by a process called V-(D)-J rearrangement and can then be subjected to somatic hypermutations which, after exposure to antigen and selection, allow affinity maturation for a particular antigen. The protein is Immunoglobulin kappa variable 1-5 of Homo sapiens (Human).